The following is a 179-amino-acid chain: Signal peptidase complex catalytic subunit SEC11A (179 aa).

Over 1 to 16 (MLSLDFLDDVRRMNKR) the chain is Cytoplasmic. The chain crosses the membrane as a helical; Signal-anchor for type II membrane protein span at residues 17–36 (QLYYQVLNFGMIVSSALMIW). Residues 37–179 (KGLMVITGSE…LGLFVLVHRE (143 aa)) lie on the Lumenal side of the membrane. Catalysis depends on charge relay system residues serine 56, histidine 96, and aspartate 122. The interval 165-176 (AVLFLLGLFVLV) is C-terminal short (CTS) helix.

It belongs to the peptidase S26B family. Component of the signal peptidase complex paralog A (SPC-A) composed of a catalytic subunit SEC11A and three accessory subunits SPCS1, SPCS2 and SPCS3. Within the complex, interacts with SPCS2 and SPCS3. The complex induces a local thinning of the ER membrane which is used to measure the length of the signal peptide (SP) h-region of protein substrates. This ensures the selectivity of the complex towards h-regions shorter than 18-20 amino acids.

It localises to the endoplasmic reticulum membrane. The catalysed reaction is Cleavage of hydrophobic, N-terminal signal or leader sequences from secreted and periplasmic proteins.. Functionally, catalytic component of the signal peptidase complex (SPC) which catalyzes the cleavage of N-terminal signal sequences from nascent proteins as they are translocated into the lumen of the endoplasmic reticulum. Specifically cleaves N-terminal signal peptides that contain a hydrophobic alpha-helix (h-region) shorter than 18-20 amino acids. This Bos taurus (Bovine) protein is Signal peptidase complex catalytic subunit SEC11A (SEC11A).